The sequence spans 322 residues: ADP,ATP carrier protein (322 aa).

3 Solcar repeats span residues 25 to 118 (STFF…FKKM), 130 to 222 (KWFA…LKPV), and 230 to 316 (GNFL…VQLL). 5 helical membrane passes run 27–54 (FFFD…VKLL), 95–119 (TANV…KKMF), 128–148 (YAKW…ASLL), 198–219 (FGPS…YDTL), and 233–253 (LASF…SYPL). ADP contacts are provided by R100 and K112. R257 contributes to the ADP binding site. The tract at residues 257–262 (RRRMMM) is important for transport activity. The Nucleotide carrier signature motif motif lies at 257 to 262 (RRRMMM). Residues 293 to 313 (AGANILRGVAGAGVLSIYDQV) form a helical membrane-spanning segment.

The protein belongs to the mitochondrial carrier (TC 2.A.29) family. In terms of assembly, monomer.

Its subcellular location is the mitochondrion inner membrane. The catalysed reaction is ADP(in) + ATP(out) = ADP(out) + ATP(in). The matrix-open state (m-state) is inhibited by the membrane-permeable bongkrekic acid (BKA). The cytoplasmic-open state (c-state) is inhibited by the membrane-impermeable toxic inhibitor carboxyatractyloside (CATR). In terms of biological role, ADP:ATP antiporter that mediates import of ADP into the mitochondrial matrix for ATP synthesis, and export of ATP out to fuel the cell. Cycles between the cytoplasmic-open state (c-state) and the matrix-open state (m-state): operates by the alternating access mechanism with a single substrate-binding site intermittently exposed to either the cytosolic (c-state) or matrix (m-state) side of the inner mitochondrial membrane. The protein is ADP,ATP carrier protein (anc1) of Schizosaccharomyces pombe (strain 972 / ATCC 24843) (Fission yeast).